The sequence spans 427 residues: 3-phosphoshikimate 1-carboxyvinyltransferase (427 aa).

3-phosphoshikimate is bound by residues Lys22, Ser23, and Arg27. Residue Lys22 coordinates phosphoenolpyruvate. Phosphoenolpyruvate-binding residues include Gly96 and Arg124. Residues Ser169, Ser170, Gln171, Ser197, Asp313, Asn336, and Lys340 each coordinate 3-phosphoshikimate. Residue Gln171 participates in phosphoenolpyruvate binding. Asp313 acts as the Proton acceptor in catalysis. Positions 344, 386, and 411 each coordinate phosphoenolpyruvate.

This sequence belongs to the EPSP synthase family. Monomer.

The protein localises to the cytoplasm. The enzyme catalyses 3-phosphoshikimate + phosphoenolpyruvate = 5-O-(1-carboxyvinyl)-3-phosphoshikimate + phosphate. It functions in the pathway metabolic intermediate biosynthesis; chorismate biosynthesis; chorismate from D-erythrose 4-phosphate and phosphoenolpyruvate: step 6/7. Catalyzes the transfer of the enolpyruvyl moiety of phosphoenolpyruvate (PEP) to the 5-hydroxyl of shikimate-3-phosphate (S3P) to produce enolpyruvyl shikimate-3-phosphate and inorganic phosphate. The chain is 3-phosphoshikimate 1-carboxyvinyltransferase from Escherichia coli O8 (strain IAI1).